The chain runs to 420 residues: Serine hydroxymethyltransferase (420 aa).

(6S)-5,6,7,8-tetrahydrofolate contacts are provided by residues Leu121 and 125-127 (GHL). Residue Lys229 is modified to N6-(pyridoxal phosphate)lysine. 355 to 357 (SPF) contributes to the (6S)-5,6,7,8-tetrahydrofolate binding site.

It belongs to the SHMT family. In terms of assembly, homodimer. The cofactor is pyridoxal 5'-phosphate.

The protein localises to the cytoplasm. The catalysed reaction is (6R)-5,10-methylene-5,6,7,8-tetrahydrofolate + glycine + H2O = (6S)-5,6,7,8-tetrahydrofolate + L-serine. It participates in one-carbon metabolism; tetrahydrofolate interconversion. Its pathway is amino-acid biosynthesis; glycine biosynthesis; glycine from L-serine: step 1/1. Catalyzes the reversible interconversion of serine and glycine with tetrahydrofolate (THF) serving as the one-carbon carrier. This reaction serves as the major source of one-carbon groups required for the biosynthesis of purines, thymidylate, methionine, and other important biomolecules. Also exhibits THF-independent aldolase activity toward beta-hydroxyamino acids, producing glycine and aldehydes, via a retro-aldol mechanism. This is Serine hydroxymethyltransferase from Chromohalobacter salexigens (strain ATCC BAA-138 / DSM 3043 / CIP 106854 / NCIMB 13768 / 1H11).